We begin with the raw amino-acid sequence, 368 residues long: Mitogen-activated protein kinase HOG1B (368 aa).

A Protein kinase domain is found at 20-299 (YVNLEPVGMG…ASQALAHPYL (280 aa)). ATP is bound by residues 26 to 34 (VGMGAFGLV) and Lys-49. Asp-141 acts as the Proton acceptor in catalysis. Residue Thr-171 is modified to Phosphothreonine. The short motif at 171-173 (TGY) is the TXY element. Phosphotyrosine is present on Tyr-173.

Belongs to the protein kinase superfamily. Ser/Thr protein kinase family. MAP kinase subfamily. HOG1 sub-subfamily. Requires Mg(2+) as cofactor. In terms of processing, phosphorylated. Dually phosphorylated on Thr-171 and Tyr-173, which activates the enzyme. Rapidly dephosphorylated upon either hypo- or hyperosmotic shock.

The protein resides in the cytoplasm. Its subcellular location is the nucleus. The enzyme catalyses L-seryl-[protein] + ATP = O-phospho-L-seryl-[protein] + ADP + H(+). It catalyses the reaction L-threonyl-[protein] + ATP = O-phospho-L-threonyl-[protein] + ADP + H(+). Its activity is regulated as follows. Activated by tyrosine and threonine phosphorylation. Functionally, mitogen-activated protein kinase involved in a signal transduction pathway that is activated by changes in the osmolarity of the extracellular environment. Controls osmotic regulation of transcription of target genes. In Wallemia ichthyophaga (strain EXF-994 / CBS 113033), this protein is Mitogen-activated protein kinase HOG1B (HOG1B).